Here is an 83-residue protein sequence, read N- to C-terminus: Small ribosomal subunit protein bS16 (83 aa).

It belongs to the bacterial ribosomal protein bS16 family.

The sequence is that of Small ribosomal subunit protein bS16 from Cupriavidus taiwanensis (strain DSM 17343 / BCRC 17206 / CCUG 44338 / CIP 107171 / LMG 19424 / R1) (Ralstonia taiwanensis (strain LMG 19424)).